Reading from the N-terminus, the 294-residue chain is Formate dehydrogenase, nitrate-inducible, iron-sulfur subunit (294 aa).

The Periplasmic segment spans residues 1–256 (MAMETQDIIK…DTSVSLWKGA (256 aa)). 4Fe-4S ferredoxin-type domains are found at residues 30–58 (VAKLIDVSTCIGCKACQVACSEWNDIRDE), 91–123 (LEWLIRKDGCMHCEDPGCLKACPSAGAIIQYAN), 124–153 (GIVDFQSENCIGCGYCIAGCPFNIPRLNKE), and 158–189 (YKCTLCVDRVSVGQEPACVKTCPTGAIHFGTK). The [4Fe-4S] cluster site is built by Cys-39, Cys-42, Cys-45, Cys-49, Cys-100, Cys-103, Cys-108, Cys-112, Cys-133, Cys-136, Cys-139, Cys-143, Cys-160, Cys-163, Cys-175, and Cys-179. Residues 257–279 (LKPLAAAGFIATFAGLIFHYIGI) traverse the membrane as a helical segment. The Cytoplasmic segment spans residues 280-294 (GPNKEVDDDEEDHHE).

Trimer of heterotrimers, consisting of subunits alpha, beta and gamma. The cofactor is [4Fe-4S] cluster.

It localises to the cell inner membrane. Its function is as follows. Formate dehydrogenase allows E.coli to use formate as major electron donor during anaerobic respiration, when nitrate is used as electron acceptor. The beta subunit FdnH is an electron transfer unit containing 4 iron-sulfur clusters; it serves as a conduit for electrons that are transferred from the formate oxidation site in the alpha subunit (FdnG) to the menaquinone associated with the gamma subunit (FdnI) of formate dehydrogenase-N. Formate dehydrogenase-N is part of a system that generates proton motive force, together with the dissimilatory nitrate reductase (Nar). The protein is Formate dehydrogenase, nitrate-inducible, iron-sulfur subunit (fdnH) of Escherichia coli (strain K12).